Reading from the N-terminus, the 110-residue chain is Parvalbumin alpha (110 aa).

An N-acetylserine modification is found at Ser2. Ser2 and Ser24 each carry phosphoserine. EF-hand domains are found at residues 39–74 (KSADDVKKVFHILDKDKSGFIEEDELGFILKGFSPD) and 78–110 (LSAKETKTLMAAGDKDGDGKIGVDEFSTLVAES). Ca(2+) is bound by residues Asp52, Asp54, Ser56, Phe58, Glu60, Glu63, Asp91, Asp93, Asp95, Lys97, and Glu102.

It belongs to the parvalbumin family.

Its function is as follows. In muscle, parvalbumin is thought to be involved in relaxation after contraction. It binds two calcium ions. This chain is Parvalbumin alpha (PVALB), found in Macaca fuscata fuscata (Japanese macaque).